Reading from the N-terminus, the 520-residue chain is Succinyl-CoA:3-ketoacid coenzyme A transferase 2A, mitochondrial (520 aa).

A mitochondrion-targeting transit peptide spans Met-1–Ser-39. The interval Glu-280 to Ser-299 is disordered. The active-site 5-glutamyl coenzyme A thioester intermediate is the Glu-342.

The protein belongs to the 3-oxoacid CoA-transferase family. Homodimer.

It localises to the mitochondrion. It carries out the reaction a 3-oxo acid + succinyl-CoA = a 3-oxoacyl-CoA + succinate. Its pathway is ketone metabolism; succinyl-CoA degradation; acetoacetyl-CoA from succinyl-CoA: step 1/1. Functionally, key enzyme for ketone body catabolism. Transfers the CoA moiety from succinate to acetoacetate. Formation of the enzyme-CoA intermediate proceeds via an unstable anhydride species formed between the carboxylate groups of the enzyme and substrate. Probably play and important roles in the energy metabolism of spermatozoa. In Mus musculus (Mouse), this protein is Succinyl-CoA:3-ketoacid coenzyme A transferase 2A, mitochondrial (Oxct2a).